Reading from the N-terminus, the 345-residue chain is Uroporphyrinogen decarboxylase (345 aa).

Residues Arg28–Arg32, Asp77, Tyr152, Ser207, and His321 contribute to the substrate site.

The protein belongs to the uroporphyrinogen decarboxylase family. Homodimer.

It localises to the cytoplasm. It catalyses the reaction uroporphyrinogen III + 4 H(+) = coproporphyrinogen III + 4 CO2. The protein operates within porphyrin-containing compound metabolism; protoporphyrin-IX biosynthesis; coproporphyrinogen-III from 5-aminolevulinate: step 4/4. In terms of biological role, catalyzes the decarboxylation of four acetate groups of uroporphyrinogen-III to yield coproporphyrinogen-III. The chain is Uroporphyrinogen decarboxylase from Arthrobacter sp. (strain FB24).